We begin with the raw amino-acid sequence, 126 residues long: Large ribosomal subunit protein eL14 (126 aa).

This sequence belongs to the eukaryotic ribosomal protein eL14 family.

The protein is Large ribosomal subunit protein eL14 (RPL14) of Tetrahymena thermophila (strain SB210).